Consider the following 351-residue polypeptide: Short-chain dehydrogenase sdnK (351 aa).

Residues Ile-46, Thr-66, Glu-98, Tyr-224, Lys-228, and Thr-268 each coordinate NADP(+). Tyr-224 functions as the Proton donor in the catalytic mechanism. The active-site Lowers pKa of active site Tyr is the Lys-228.

This sequence belongs to the short-chain dehydrogenases/reductases (SDR) family.

It functions in the pathway antibiotic biosynthesis. Functionally, short-chain dehydrogenase; part of the gene cluster that mediates the biosynthesis of sordarin and hypoxysordarin, glycoside antibiotics with a unique tetracyclic diterpene aglycone structure. First, the geranylgeranyl diphosphate synthase sdnC constructs GGDP from farnesyl diphosphate and isopentenyl diphosphate. The diterpene cyclase sdnA then catalyzes the cyclization of GGDP to afford cycloaraneosene. Cycloaraneosene is then hydroxylated four times by the putative cytochrome P450 monooxygenases sdnB, sdnE, sdnF and sdnH to give a hydroxylated cycloaraneosene derivative such as cycloaraneosene-8,9,13,19-tetraol. Although the order of the hydroxylations is unclear, at least C8, C9 and C13 of the cycloaraneosene skeleton are hydroxylated before the sordaricin formation. Dehydration of the 13-hydroxy group of the hydroxylated cycloaraneosene derivative might be catalyzed by an unassigned hypothetical protein such as sdnG and sdnP to construct the cyclopentadiene moiety. The FAD-dependent oxidoreductase sdnN is proposed to catalyze the oxidation at C9 of the hydroxylated cycloaraneosene derivative and also catalyze the Baeyer-Villiger oxidation to give the lactone intermediate. The presumed lactone intermediate would be hydrolyzed to give an acrolein moiety and a carboxylate moiety. Then, [4+2]cycloaddition would occur between the acrolein moiety and the cyclopentadiene moiety to give sordaricin. SdnN might also be involved in the [4+2]cycloaddition after the hypothesized oxidation to accommodate the oxidized product and prompt the [4+2]cycloaddition. GDP-6-deoxy-D-altrose may be biosynthesized from GDP-D-mannose by the putative GDP-mannose-4,6-dehydratase sdnI and the short-chain dehydrogenase sdnK. The glycosyltransferase sdnJ catalyzes the attachment of 6-deoxy-D-altrose onto the 19-hydroxy group of sordaricin to give 4'-O-demethylsordarin. The methyltransferase sdnD would complete the biosynthesis of sordarin. Sordarin can be further modified into hypoxysordarin. The unique acyl chain at the 3'-hydroxy group of hypoxysordarin would be constructed by an iterative type I PKS sdnO and the trans-acting polyketide methyltransferase sdnL. SdnL would be responsible for the introduction of an alpha-methyl group of the polyketide chain. Alternatively, the beta-lactamase-like protein sdnR might be responsible for the cleavage and transfer of the polyketide chain from the PKS sdnO to sordarin. Two putative cytochrome P450 monooxygenases, sdnQ and sdnT, might catalyze the epoxidations of the polyketide chain to complete the biosynthesis of hypoxysordarin. Transcriptional regulators sdnM and sdnS are presumably encoded for the transcriptional regulation of the expression of the sdn gene cluster. The polypeptide is Short-chain dehydrogenase sdnK (Sordaria araneosa (Pleurage araneosa)).